Here is a 498-residue protein sequence, read N- to C-terminus: Lysine--tRNA ligase (498 aa).

Mg(2+)-binding residues include Glu407 and Glu414.

Belongs to the class-II aminoacyl-tRNA synthetase family. In terms of assembly, homodimer. It depends on Mg(2+) as a cofactor.

It localises to the cytoplasm. The catalysed reaction is tRNA(Lys) + L-lysine + ATP = L-lysyl-tRNA(Lys) + AMP + diphosphate. This Rhizobium johnstonii (strain DSM 114642 / LMG 32736 / 3841) (Rhizobium leguminosarum bv. viciae) protein is Lysine--tRNA ligase.